Reading from the N-terminus, the 208-residue chain is Uracil phosphoribosyltransferase (208 aa).

Residues arginine 78, arginine 103, and 130–138 (DPMLATGGS) each bind 5-phospho-alpha-D-ribose 1-diphosphate. Uracil contacts are provided by residues isoleucine 193 and 198–200 (GDA). Aspartate 199 serves as a coordination point for 5-phospho-alpha-D-ribose 1-diphosphate.

It belongs to the UPRTase family. Mg(2+) serves as cofactor.

The enzyme catalyses UMP + diphosphate = 5-phospho-alpha-D-ribose 1-diphosphate + uracil. The protein operates within pyrimidine metabolism; UMP biosynthesis via salvage pathway; UMP from uracil: step 1/1. Its activity is regulated as follows. Allosterically activated by GTP. In terms of biological role, catalyzes the conversion of uracil and 5-phospho-alpha-D-ribose 1-diphosphate (PRPP) to UMP and diphosphate. In Shewanella denitrificans (strain OS217 / ATCC BAA-1090 / DSM 15013), this protein is Uracil phosphoribosyltransferase.